The primary structure comprises 436 residues: 3-ketoacyl-CoA thiolase (436 aa).

Residue C99 is the Acyl-thioester intermediate of the active site. Active-site proton acceptor residues include H392 and C422.

It belongs to the thiolase-like superfamily. Thiolase family. As to quaternary structure, heterotetramer of two alpha chains (FadJ) and two beta chains (FadI).

Its subcellular location is the cytoplasm. The enzyme catalyses an acyl-CoA + acetyl-CoA = a 3-oxoacyl-CoA + CoA. The protein operates within lipid metabolism; fatty acid beta-oxidation. In terms of biological role, catalyzes the final step of fatty acid oxidation in which acetyl-CoA is released and the CoA ester of a fatty acid two carbons shorter is formed. The protein is 3-ketoacyl-CoA thiolase of Salmonella typhimurium (strain LT2 / SGSC1412 / ATCC 700720).